The chain runs to 402 residues: CCA-adding enzyme (402 aa).

ATP-binding residues include glycine 32 and arginine 35. CTP is bound by residues glycine 32 and arginine 35. Positions 45 and 47 each coordinate Mg(2+). Residues arginine 119, aspartate 162, arginine 165, arginine 168, and arginine 171 each coordinate ATP. Residues arginine 119, aspartate 162, arginine 165, arginine 168, and arginine 171 each contribute to the CTP site.

This sequence belongs to the tRNA nucleotidyltransferase/poly(A) polymerase family. Bacterial CCA-adding enzyme type 3 subfamily. In terms of assembly, homodimer. Requires Mg(2+) as cofactor.

It catalyses the reaction a tRNA precursor + 2 CTP + ATP = a tRNA with a 3' CCA end + 3 diphosphate. The enzyme catalyses a tRNA with a 3' CCA end + 2 CTP + ATP = a tRNA with a 3' CCACCA end + 3 diphosphate. Catalyzes the addition and repair of the essential 3'-terminal CCA sequence in tRNAs without using a nucleic acid template. Adds these three nucleotides in the order of C, C, and A to the tRNA nucleotide-73, using CTP and ATP as substrates and producing inorganic pyrophosphate. tRNA 3'-terminal CCA addition is required both for tRNA processing and repair. Also involved in tRNA surveillance by mediating tandem CCA addition to generate a CCACCA at the 3' terminus of unstable tRNAs. While stable tRNAs receive only 3'-terminal CCA, unstable tRNAs are marked with CCACCA and rapidly degraded. In Lactococcus lactis subsp. cremoris (strain SK11), this protein is CCA-adding enzyme.